We begin with the raw amino-acid sequence, 241 residues long: Uridylate kinase (241 aa).

15–18 (KLSG) contacts ATP. The segment at 23 to 28 (GTEGFG) is involved in allosteric activation by GTP. Residue Gly57 participates in UMP binding. Gly58 and Arg62 together coordinate ATP. UMP contacts are provided by residues Asp77 and 138 to 145 (TGNPFFTT). ATP contacts are provided by Thr165, Phe171, and Asp174.

Belongs to the UMP kinase family. Homohexamer.

The protein resides in the cytoplasm. It carries out the reaction UMP + ATP = UDP + ADP. It participates in pyrimidine metabolism; CTP biosynthesis via de novo pathway; UDP from UMP (UMPK route): step 1/1. Allosterically activated by GTP. Inhibited by UTP. Its function is as follows. Catalyzes the reversible phosphorylation of UMP to UDP. In Salmonella choleraesuis (strain SC-B67), this protein is Uridylate kinase.